A 179-amino-acid polypeptide reads, in one-letter code: Large ribosomal subunit protein uL5c (179 aa).

The protein belongs to the universal ribosomal protein uL5 family. As to quaternary structure, part of the 50S ribosomal subunit; contacts the 5S rRNA.

It is found in the plastid. The protein resides in the chloroplast. Functionally, binds 5S rRNA, forms part of the central protuberance of the 50S subunit. The protein is Large ribosomal subunit protein uL5c (rpl5) of Euglena gracilis.